The sequence spans 80 residues: Exodeoxyribonuclease 7 small subunit (80 aa).

This sequence belongs to the XseB family. In terms of assembly, heterooligomer composed of large and small subunits.

The protein resides in the cytoplasm. The enzyme catalyses Exonucleolytic cleavage in either 5'- to 3'- or 3'- to 5'-direction to yield nucleoside 5'-phosphates.. Its function is as follows. Bidirectionally degrades single-stranded DNA into large acid-insoluble oligonucleotides, which are then degraded further into small acid-soluble oligonucleotides. The protein is Exodeoxyribonuclease 7 small subunit of Rickettsia felis (strain ATCC VR-1525 / URRWXCal2) (Rickettsia azadi).